Consider the following 877-residue polypeptide: Phosphoenolpyruvate carboxylase (877 aa).

Residues histidine 138 and lysine 543 contribute to the active site.

The protein belongs to the PEPCase type 1 family. Requires Mg(2+) as cofactor.

It catalyses the reaction oxaloacetate + phosphate = phosphoenolpyruvate + hydrogencarbonate. Forms oxaloacetate, a four-carbon dicarboxylic acid source for the tricarboxylic acid cycle. The polypeptide is Phosphoenolpyruvate carboxylase (Aeromonas salmonicida (strain A449)).